We begin with the raw amino-acid sequence, 143 residues long: MRTLGILEERNSRHCHSHFFLLSREVKCLKQFYTKLCYSTNNQPSISKSIPEHMHSLVYMVGHLLVWMLVGTIVLSLDIIFPALVTEPHLLHLLSFPSDISDTLSLSQVTSSYSNLLKDLEVLFFMGSLSVSIINPSSNGCNK.

A helical transmembrane segment spans residues 65 to 85 (LVWMLVGTIVLSLDIIFPALV).

The protein localises to the membrane. This is an uncharacterized protein from Saccharomyces cerevisiae (strain ATCC 204508 / S288c) (Baker's yeast).